Reading from the N-terminus, the 217-residue chain is MENDDPQKLMPEPRIFVERTLALIKPDAIHKTDEIEDIILQSGFTILQKRRLQLSPEQCSDFYAEHYGKLHFPHLTAFMSSGPVVALALARDQAIATWKAIMGPVSSIKARETHPDCLRARFGTCDLRNAVHGSETFSAAEREIRFMFPHSVIEPIPMGEAAKDYLSRFINPTLLVGLTELCKIKPEDPYTWLADWLMNNNPNKPKVLDGAAVEEAA.

The tract at residues 18–151 is NDK; the sequence is ERTLALIKPD…REIRFMFPHS (134 aa).

Belongs to the NDK family.

Its subcellular location is the cell projection. It is found in the cilium. In terms of biological role, functions as part of axonemal radial spoke complexes that play an important part in the motility of sperm and cilia. Does not seem to have nucleoside diphosphate kinase (NDPK) activity. Exhibits a 3'-5' exonuclease activity with a preference for single-stranded DNA, suggesting roles in DNA proofreading and repair. This is Nucleoside diphosphate kinase homolog 5 (nme5) from Danio rerio (Zebrafish).